We begin with the raw amino-acid sequence, 158 residues long: Snaclec mucrocetin subunit alpha (158 aa).

Residues 1–23 (MGRFIFVSFGLLVVFLSLSGTGA) form the signal peptide. 3 disulfides stabilise this stretch: cysteine 27–cysteine 38, cysteine 55–cysteine 152, and cysteine 127–cysteine 144. Positions 34 to 153 (YDRYCYQAFS…CGRENPFVCK (120 aa)) constitute a C-type lectin domain.

This sequence belongs to the snaclec family. As to quaternary structure, tetramer of heterodimers of alpha and beta subunits (alphabeta)(4); disulfide-linked. As to expression, expressed by the venom gland.

The protein resides in the secreted. Its function is as follows. Platelet-agglutinating factor that acts in a vWF-independent manner. Binds specifically to platelet GPIbalpha (GP1BA) to a distinct binding site from that of flavocetin-A. The protein is Snaclec mucrocetin subunit alpha of Protobothrops mucrosquamatus (Taiwan habu).